The sequence spans 62 residues: MESRLLDILVCPVCKGRLEFQRAQAELVCNADRLAFPVRDGVPIMLEAEARSLDAEAPAQPS.

It belongs to the UPF0434 family.

The chain is UPF0434 protein BP2767 from Bordetella pertussis (strain Tohama I / ATCC BAA-589 / NCTC 13251).